The chain runs to 447 residues: ATP-dependent protease ATPase subunit HslU (447 aa).

ATP is bound by residues Ile-18, 60–65, Asp-259, Glu-325, and Arg-397; that span reads GVGKTE.

Belongs to the ClpX chaperone family. HslU subfamily. In terms of assembly, a double ring-shaped homohexamer of HslV is capped on each side by a ring-shaped HslU homohexamer. The assembly of the HslU/HslV complex is dependent on binding of ATP.

It is found in the cytoplasm. Its function is as follows. ATPase subunit of a proteasome-like degradation complex; this subunit has chaperone activity. The binding of ATP and its subsequent hydrolysis by HslU are essential for unfolding of protein substrates subsequently hydrolyzed by HslV. HslU recognizes the N-terminal part of its protein substrates and unfolds these before they are guided to HslV for hydrolysis. The polypeptide is ATP-dependent protease ATPase subunit HslU (Burkholderia cenocepacia (strain ATCC BAA-245 / DSM 16553 / LMG 16656 / NCTC 13227 / J2315 / CF5610) (Burkholderia cepacia (strain J2315))).